The chain runs to 495 residues: ATP synthase subunit beta, chloroplastic (495 aa).

An ATP-binding site is contributed by 172 to 179 (GGAGVGKT).

This sequence belongs to the ATPase alpha/beta chains family. As to quaternary structure, F-type ATPases have 2 components, CF(1) - the catalytic core - and CF(0) - the membrane proton channel. CF(1) has five subunits: alpha(3), beta(3), gamma(1), delta(1), epsilon(1). CF(0) has four main subunits: a(1), b(1), b'(1) and c(9-12).

It is found in the plastid. The protein localises to the chloroplast thylakoid membrane. It carries out the reaction ATP + H2O + 4 H(+)(in) = ADP + phosphate + 5 H(+)(out). Functionally, produces ATP from ADP in the presence of a proton gradient across the membrane. The catalytic sites are hosted primarily by the beta subunits. The chain is ATP synthase subunit beta, chloroplastic from Hyacinthus orientalis (Common hyacinth).